A 162-amino-acid polypeptide reads, in one-letter code: G/U mismatch-specific DNA glycosylase (162 aa).

It belongs to the uracil-DNA glycosylase (UDG) superfamily. TDG/mug family. In terms of assembly, binds DNA as a monomer.

The protein resides in the cytoplasm. The enzyme catalyses Specifically hydrolyzes mismatched double-stranded DNA and polynucleotides, releasing free uracil.. In terms of biological role, excises ethenocytosine and uracil, which can arise by alkylation or deamination of cytosine, respectively, from the corresponding mispairs with guanine in ds-DNA. It is capable of hydrolyzing the carbon-nitrogen bond between the sugar-phosphate backbone of the DNA and the mispaired base. The complementary strand guanine functions in substrate recognition. Required for DNA damage lesion repair in stationary-phase cells. The polypeptide is G/U mismatch-specific DNA glycosylase (Serratia proteamaculans (strain 568)).